A 680-amino-acid polypeptide reads, in one-letter code: DNA-directed RNA polymerase subunit beta' (680 aa).

The Zn(2+) site is built by cysteine 69, cysteine 71, cysteine 87, and cysteine 90. Mg(2+) contacts are provided by aspartate 489, aspartate 491, and aspartate 493.

Belongs to the RNA polymerase beta' chain family. RpoC1 subfamily. In plastids the minimal PEP RNA polymerase catalytic core is composed of four subunits: alpha, beta, beta', and beta''. When a (nuclear-encoded) sigma factor is associated with the core the holoenzyme is formed, which can initiate transcription. Mg(2+) is required as a cofactor. Zn(2+) serves as cofactor.

Its subcellular location is the plastid. It localises to the chloroplast. It carries out the reaction RNA(n) + a ribonucleoside 5'-triphosphate = RNA(n+1) + diphosphate. Its function is as follows. DNA-dependent RNA polymerase catalyzes the transcription of DNA into RNA using the four ribonucleoside triphosphates as substrates. The polypeptide is DNA-directed RNA polymerase subunit beta' (Cucumis sativus (Cucumber)).